The primary structure comprises 207 residues: Guanylate kinase (207 aa).

Positions 4–184 (GTLYIVSAPS…ALTDLKTIIR (181 aa)) constitute a Guanylate kinase-like domain. 11–18 (APSGAGKS) contacts ATP.

It belongs to the guanylate kinase family.

It is found in the cytoplasm. The catalysed reaction is GMP + ATP = GDP + ADP. In terms of biological role, essential for recycling GMP and indirectly, cGMP. The sequence is that of Guanylate kinase from Escherichia coli O157:H7.